We begin with the raw amino-acid sequence, 720 residues long: Portal protein (720 aa).

The protein belongs to the p22likevirus portal protein family. Homododecamer.

Its subcellular location is the virion. Forms the portal vertex of the capsid. This portal plays critical roles in head assembly, genome packaging, neck/tail attachment, and genome ejection. Procapsid assembly may initiate with a nucleation complex composed of portal and scaffolding proteins. The portal protein multimerizes as a single ring-shaped homododecamer arranged around a central channel. This Acyrthosiphon pisum secondary endosymbiont phage 1 (Bacteriophage APSE-1) protein is Portal protein (19).